The following is a 356-amino-acid chain: Phospho-2-dehydro-3-deoxyheptonate aldolase, Tyr-sensitive (356 aa).

Belongs to the class-I DAHP synthase family. Requires a divalent metal cation as cofactor.

The enzyme catalyses D-erythrose 4-phosphate + phosphoenolpyruvate + H2O = 7-phospho-2-dehydro-3-deoxy-D-arabino-heptonate + phosphate. The protein operates within metabolic intermediate biosynthesis; chorismate biosynthesis; chorismate from D-erythrose 4-phosphate and phosphoenolpyruvate: step 1/7. Specifically feedback inhibited by tyrosine with 50% inhibition observed at 9 microM tyrosine, pH 7.0. Its function is as follows. Stereospecific condensation of phosphoenolpyruvate (PEP) and D-erythrose-4-phosphate (E4P) giving rise to 3-deoxy-D-arabino-heptulosonate-7-phosphate (DAHP). This Escherichia coli (strain K12) protein is Phospho-2-dehydro-3-deoxyheptonate aldolase, Tyr-sensitive (aroF).